The primary structure comprises 162 residues: Disulfide bond formation protein B (162 aa).

Residues 1–8 (MTPLFRKA) lie on the Cytoplasmic side of the membrane. The chain crosses the membrane as a helical span at residues 9-25 (VWLLFAVSVCAFAGSLA). Topologically, residues 26–43 (AQYVLGMEPCVLCISQRL) are periplasmic. A disulfide bridge links Cys-35 with Cys-38. The helical transmembrane segment at 44–60 (CVLATALCTAIVLMCRP) threads the bilayer. Residues 61-67 (RRRAGGL) lie on the Cytoplasmic side of the membrane. The helical transmembrane segment at 68-85 (FGAVFISIPAVTGISVAA) threads the bilayer. Residues 86–141 (YQLWLQSLPPGTAPSCGAPWTFRLKGWSLFDWFEPVVRGFGNCAEPDYLLGVALPV) lie on the Periplasmic side of the membrane. A disulfide bridge connects residues Cys-101 and Cys-128. A helical membrane pass occupies residues 142–160 (WSAAYFLAVVLTVWWAWAR). The Cytoplasmic portion of the chain corresponds to 161–162 (AK).

The protein belongs to the DsbB family.

The protein resides in the cell inner membrane. In terms of biological role, required for disulfide bond formation in some periplasmic proteins. Acts by oxidizing the DsbA protein. In Neisseria meningitidis serogroup C / serotype 2a (strain ATCC 700532 / DSM 15464 / FAM18), this protein is Disulfide bond formation protein B.